The primary structure comprises 219 residues: Triosephosphate isomerase (219 aa).

Residue 6 to 8 (NYK) participates in substrate binding. H90 functions as the Electrophile in the catalytic mechanism. The active-site Proton acceptor is the E138. Residues I143, G178, and 199–200 (AS) contribute to the substrate site.

Belongs to the triosephosphate isomerase family. Homotetramer; dimer of dimers.

Its subcellular location is the cytoplasm. The enzyme catalyses D-glyceraldehyde 3-phosphate = dihydroxyacetone phosphate. It participates in carbohydrate biosynthesis; gluconeogenesis. The protein operates within carbohydrate degradation; glycolysis; D-glyceraldehyde 3-phosphate from glycerone phosphate: step 1/1. Functionally, involved in the gluconeogenesis. Catalyzes stereospecifically the conversion of dihydroxyacetone phosphate (DHAP) to D-glyceraldehyde-3-phosphate (G3P). This is Triosephosphate isomerase from Methanocaldococcus jannaschii (strain ATCC 43067 / DSM 2661 / JAL-1 / JCM 10045 / NBRC 100440) (Methanococcus jannaschii).